We begin with the raw amino-acid sequence, 205 residues long: Small ribosomal subunit protein uS4 (205 aa).

Residues 17-46 (ENIWGRPKSPVNKREYGPGQHGQRRKGKLS) are disordered. An S4 RNA-binding domain is found at 94-157 (SRLDAVVYRA…KQLVIVLESV (64 aa)).

Belongs to the universal ribosomal protein uS4 family. Part of the 30S ribosomal subunit. Contacts protein S5. The interaction surface between S4 and S5 is involved in control of translational fidelity.

Its function is as follows. One of the primary rRNA binding proteins, it binds directly to 16S rRNA where it nucleates assembly of the body of the 30S subunit. In terms of biological role, with S5 and S12 plays an important role in translational accuracy. The protein is Small ribosomal subunit protein uS4 of Mesorhizobium japonicum (strain LMG 29417 / CECT 9101 / MAFF 303099) (Mesorhizobium loti (strain MAFF 303099)).